A 78-amino-acid chain; its full sequence is Large ribosomal subunit protein bL28 (78 aa).

Residues 1 to 20 are disordered; sequence MSRVCQVTSKRPAVGNNRSH.

It belongs to the bacterial ribosomal protein bL28 family.

The chain is Large ribosomal subunit protein bL28 from Haemophilus ducreyi (strain 35000HP / ATCC 700724).